Reading from the N-terminus, the 363-residue chain is Putative C-&gt;U-editing enzyme APOBEC-4 (363 aa).

The CMP/dCMP-type deaminase domain occupies 61 to 177; it reads PQTKHLTFYE…AWNREALRSL (117 aa). Position 93 (histidine 93) interacts with Zn(2+). Glutamate 95 functions as the Proton donor in the catalytic mechanism. The Zn(2+) site is built by cysteine 127 and cysteine 134.

It belongs to the cytidine and deoxycytidylate deaminase family. Requires Zn(2+) as cofactor.

Functionally, putative C to U editing enzyme whose physiological substrate is not yet known. This is Putative C-&gt;U-editing enzyme APOBEC-4 (APOBEC4) from Macaca fascicularis (Crab-eating macaque).